Consider the following 445-residue polypeptide: Argininosuccinate synthase (445 aa).

ATP is bound by residues 17–25 (AFSGGLDTS) and alanine 43. Tyrosine 99 is an L-citrulline binding site. Residues glycine 129 and threonine 131 each contribute to the ATP site. L-aspartate is bound by residues threonine 131, asparagine 135, and aspartate 136. Residue asparagine 135 coordinates L-citrulline. Residue aspartate 136 participates in ATP binding. 2 residues coordinate L-citrulline: arginine 139 and serine 192. Aspartate 194 lines the ATP pocket. 3 residues coordinate L-citrulline: threonine 201, glutamate 203, and glutamate 280.

The protein belongs to the argininosuccinate synthase family. Type 2 subfamily. Homotetramer.

It is found in the cytoplasm. The catalysed reaction is L-citrulline + L-aspartate + ATP = 2-(N(omega)-L-arginino)succinate + AMP + diphosphate + H(+). It participates in amino-acid biosynthesis; L-arginine biosynthesis; L-arginine from L-ornithine and carbamoyl phosphate: step 2/3. This chain is Argininosuccinate synthase, found in Burkholderia ambifaria (strain ATCC BAA-244 / DSM 16087 / CCUG 44356 / LMG 19182 / AMMD) (Burkholderia cepacia (strain AMMD)).